Reading from the N-terminus, the 107-residue chain is Stellacyanin (107 aa).

Residues 1 to 105 (TVYTVGDSAG…GQKVHINVTV (105 aa)) form the Phytocyanin domain. N-linked (GlcNAc...) asparagine glycosylation is present at N28. H46 contributes to the Cu cation binding site. The cysteines at positions 59 and 93 are disulfide-linked. N60 carries an N-linked (GlcNAc...) asparagine glycan. Cu cation is bound by residues C87, H92, and Q97. N-linked (GlcNAc...) asparagine glycosylation is present at N102.

The sequence is that of Stellacyanin from Toxicodendron vernicifluum (Japanese lacquer tree).